A 312-amino-acid chain; its full sequence is Methionyl-tRNA formyltransferase (312 aa).

Residue 112–115 (SLLP) coordinates (6S)-5,6,7,8-tetrahydrofolate.

This sequence belongs to the Fmt family.

It catalyses the reaction L-methionyl-tRNA(fMet) + (6R)-10-formyltetrahydrofolate = N-formyl-L-methionyl-tRNA(fMet) + (6S)-5,6,7,8-tetrahydrofolate + H(+). Functionally, attaches a formyl group to the free amino group of methionyl-tRNA(fMet). The formyl group appears to play a dual role in the initiator identity of N-formylmethionyl-tRNA by promoting its recognition by IF2 and preventing the misappropriation of this tRNA by the elongation apparatus. The chain is Methionyl-tRNA formyltransferase from Magnetococcus marinus (strain ATCC BAA-1437 / JCM 17883 / MC-1).